Here is a 332-residue protein sequence, read N- to C-terminus: uncharacterized protein (332 aa).

The first 32 residues, 1 to 32 (MSRDRGARGLRKYGRFALATGAATALSLTASG), serve as a signal peptide directing secretion. A lipid anchor (N-palmitoyl cysteine) is attached at cysteine 33. The S-diacylglycerol cysteine moiety is linked to residue cysteine 33.

The protein localises to the cell membrane. This is an uncharacterized protein from Streptomyces avermitilis (strain ATCC 31267 / DSM 46492 / JCM 5070 / NBRC 14893 / NCIMB 12804 / NRRL 8165 / MA-4680).